Consider the following 329-residue polypeptide: Protoheme IX farnesyltransferase (329 aa).

7 helical membrane passes run 61 to 81, 108 to 128, 130 to 150, 158 to 178, 186 to 206, 243 to 263, and 284 to 304; these read LACT…LNCL, AFLI…AGVN, LAAG…TIVL, IVIG…AATG, WLFG…ALLL, LLGV…VLPF, and AKGL…LLLL.

It belongs to the UbiA prenyltransferase family. Protoheme IX farnesyltransferase subfamily.

It is found in the cell inner membrane. The enzyme catalyses heme b + (2E,6E)-farnesyl diphosphate + H2O = Fe(II)-heme o + diphosphate. It functions in the pathway porphyrin-containing compound metabolism; heme O biosynthesis; heme O from protoheme: step 1/1. Functionally, converts heme B (protoheme IX) to heme O by substitution of the vinyl group on carbon 2 of heme B porphyrin ring with a hydroxyethyl farnesyl side group. This chain is Protoheme IX farnesyltransferase, found in Synechococcus sp. (strain RCC307).